We begin with the raw amino-acid sequence, 81 residues long: UPF0181 protein Spro_2806 (81 aa).

The segment at 43 to 81 (EKHQGDQVSVMFDDEDDDEEYQERPDDQADDDSEEDENY) is disordered. Composition is skewed to acidic residues over residues 54–63 (FDDEDDDEEY) and 70–81 (QADDDSEEDENY).

The protein belongs to the UPF0181 family.

The polypeptide is UPF0181 protein Spro_2806 (Serratia proteamaculans (strain 568)).